The sequence spans 102 residues: NADH-quinone oxidoreductase subunit K (102 aa).

A run of 3 helical transmembrane segments spans residues 6-26 (LIGI…GVLA), 30-50 (MLFQ…GFIA), and 63-83 (MFIL…ALFL).

It belongs to the complex I subunit 4L family. NDH-1 is composed of 14 different subunits. Subunits NuoA, H, J, K, L, M, N constitute the membrane sector of the complex.

Its subcellular location is the cell inner membrane. The enzyme catalyses a quinone + NADH + 5 H(+)(in) = a quinol + NAD(+) + 4 H(+)(out). In terms of biological role, NDH-1 shuttles electrons from NADH, via FMN and iron-sulfur (Fe-S) centers, to quinones in the respiratory chain. The immediate electron acceptor for the enzyme in this species is believed to be ubiquinone. Couples the redox reaction to proton translocation (for every two electrons transferred, four hydrogen ions are translocated across the cytoplasmic membrane), and thus conserves the redox energy in a proton gradient. This is NADH-quinone oxidoreductase subunit K from Rhodopseudomonas palustris (strain TIE-1).